The chain runs to 571 residues: NADH-quinone oxidoreductase subunit C/D (571 aa).

The interval 1-171 is NADH dehydrogenase I subunit C; it reads MQASEKTLNE…NLSNTMNYRR (171 aa). The interval 194-571 is NADH dehydrogenase I subunit D; the sequence is AQVVLNWGPL…LDPVVGEVDR (378 aa).

It in the N-terminal section; belongs to the complex I 30 kDa subunit family. In the C-terminal section; belongs to the complex I 49 kDa subunit family. In terms of assembly, NDH-1 is composed of 13 different subunits. Subunits NuoB, CD, E, F, and G constitute the peripheral sector of the complex.

The protein localises to the cell inner membrane. It catalyses the reaction a quinone + NADH + 5 H(+)(in) = a quinol + NAD(+) + 4 H(+)(out). NDH-1 shuttles electrons from NADH, via FMN and iron-sulfur (Fe-S) centers, to quinones in the respiratory chain. The immediate electron acceptor for the enzyme in this species is believed to be ubiquinone. Couples the redox reaction to proton translocation (for every two electrons transferred, four hydrogen ions are translocated across the cytoplasmic membrane), and thus conserves the redox energy in a proton gradient. The sequence is that of NADH-quinone oxidoreductase subunit C/D (nuoC) from Hydrogenobaculum sp. (strain Y04AAS1).